An 860-amino-acid chain; its full sequence is Leucine--tRNA ligase (860 aa).

The 'HIGH' region signature appears at 42–52 (PYPSGRLHMGH). The 'KMSKS' region signature appears at 619-623 (KMSKS). ATP is bound at residue Lys622.

It belongs to the class-I aminoacyl-tRNA synthetase family.

Its subcellular location is the cytoplasm. The enzyme catalyses tRNA(Leu) + L-leucine + ATP = L-leucyl-tRNA(Leu) + AMP + diphosphate. The polypeptide is Leucine--tRNA ligase (Escherichia coli O7:K1 (strain IAI39 / ExPEC)).